Consider the following 431-residue polypeptide: MFFGGEGSLTYTLVIICFLTLRLSASQNCLKKSLEDVVIDIQSSLSKGIRGNEPVYTSTQEDCINSCCSTKNISGDKACNLMIFDTRKTARQPNCYLFFCPNEEACPLKPAKGLMSYRIITDFPSLTRNLPSQELPQEDSLLHGQFSQAVTPLAHHHTDYSKPTDISWRDTLSQKFGSSDHLEKLFKMDEASAQLLAYKEKGHSQSSQFSSDQEIAHLLPENVSALPATVAVASPHTTSATPKPATLLPTNASVTPSGTSQPQLATTAPPVTTVTSQPPTTLISTVFTRAAATLQAMATTAVLTTTFQAPTDSKGSLETIPFTEISNLTLNTGNVYNPTALSMSNVESSTMNKTASWEGREASPGSSSQGSVPENQYGLPFEKWLLIGSLLFGVLFLVIGLVLLGRILSESLRRKRYSRLDYLINGIYVDI.

An N-terminal signal peptide occupies residues 1-26 (MFFGGEGSLTYTLVIICFLTLRLSAS). The Extracellular segment spans residues 27–385 (QNCLKKSLED…QYGLPFEKWL (359 aa)). The 85-residue stretch at 33–117 (SLEDVVIDIQ…LKPAKGLMSY (85 aa)) folds into the MANSC domain. N-linked (GlcNAc...) asparagine glycosylation is found at Asn72, Asn222, and Asn251. The tract at residues 234–277 (SPHTTSATPKPATLLPTNASVTPSGTSQPQLATTAPPVTTVTSQ) is disordered. Residues 248–261 (LPTNASVTPSGTSQ) are compositionally biased toward polar residues. The span at 262 to 277 (PQLATTAPPVTTVTSQ) shows a compositional bias: low complexity. N-linked (GlcNAc...) asparagine glycosylation is found at Asn327 and Asn352. Positions 352-372 (NKTASWEGREASPGSSSQGSV) are disordered. A helical membrane pass occupies residues 386-408 (LIGSLLFGVLFLVIGLVLLGRIL). Residues 409–431 (SESLRRKRYSRLDYLINGIYVDI) lie on the Cytoplasmic side of the membrane.

As to expression, widely expressed.

It localises to the membrane. This chain is MANSC domain-containing protein 1 (MANSC1), found in Homo sapiens (Human).